The following is a 335-amino-acid chain: uncharacterized protein (335 aa).

The tract at residues 201–236 is disordered; it reads GPMAKNKARRKEDNYDTHNCDDANQDKKEEAEGKNT. Positions 210-235 are enriched in basic and acidic residues; that stretch reads RKEDNYDTHNCDDANQDKKEEAEGKN.

Its function is as follows. Dispensable for normal development and fertility. This is an uncharacterized protein from Homo sapiens (Human).